The sequence spans 89 residues: Small ribosomal subunit protein uS15 (89 aa).

This sequence belongs to the universal ribosomal protein uS15 family. Part of the 30S ribosomal subunit. Forms a bridge to the 50S subunit in the 70S ribosome, contacting the 23S rRNA.

Its function is as follows. One of the primary rRNA binding proteins, it binds directly to 16S rRNA where it helps nucleate assembly of the platform of the 30S subunit by binding and bridging several RNA helices of the 16S rRNA. In terms of biological role, forms an intersubunit bridge (bridge B4) with the 23S rRNA of the 50S subunit in the ribosome. The protein is Small ribosomal subunit protein uS15 of Sinorhizobium medicae (strain WSM419) (Ensifer medicae).